A 161-amino-acid polypeptide reads, in one-letter code: 2-C-methyl-D-erythritol 2,4-cyclodiphosphate synthase (161 aa).

Asp-11 and His-13 together coordinate a divalent metal cation. Residues 11-13 (DIH) and 37-38 (HS) each bind 4-CDP-2-C-methyl-D-erythritol 2-phosphate. Residue His-45 participates in a divalent metal cation binding. Residues 59 to 61 (DIG), 135 to 138 (TTNE), and Arg-145 each bind 4-CDP-2-C-methyl-D-erythritol 2-phosphate.

This sequence belongs to the IspF family. Homotrimer. A divalent metal cation is required as a cofactor.

The catalysed reaction is 4-CDP-2-C-methyl-D-erythritol 2-phosphate = 2-C-methyl-D-erythritol 2,4-cyclic diphosphate + CMP. The protein operates within isoprenoid biosynthesis; isopentenyl diphosphate biosynthesis via DXP pathway; isopentenyl diphosphate from 1-deoxy-D-xylulose 5-phosphate: step 4/6. Its function is as follows. Involved in the biosynthesis of isopentenyl diphosphate (IPP) and dimethylallyl diphosphate (DMAPP), two major building blocks of isoprenoid compounds. Catalyzes the conversion of 4-diphosphocytidyl-2-C-methyl-D-erythritol 2-phosphate (CDP-ME2P) to 2-C-methyl-D-erythritol 2,4-cyclodiphosphate (ME-CPP) with a corresponding release of cytidine 5-monophosphate (CMP). This Synechocystis sp. (strain ATCC 27184 / PCC 6803 / Kazusa) protein is 2-C-methyl-D-erythritol 2,4-cyclodiphosphate synthase.